A 370-amino-acid polypeptide reads, in one-letter code: 1-propanol dehydrogenase PduQ (370 aa).

It belongs to the iron-containing alcohol dehydrogenase family. Interacts with PduP, probably via the N-terminus of PduQ. Fe cation serves as cofactor.

It localises to the bacterial microcompartment. It catalyses the reaction 1-propanol + NAD(+) = propanal + NADH + H(+). The protein operates within polyol metabolism; 1,2-propanediol degradation. With respect to regulation, enzyme is oxygen sensitive. In terms of biological role, an iron-dependent alcohol dehydrogenase required for optimal 1,2-propanediol (1,2-PD) degradation. NAD(+) and NADH are regenerated internally within the bacterial microcompartment (BMC) dedicated to 1,2-PD degradation by the PduP and PduQ enzymes, which reduce NAD(+) and oxidize NADH respectively, although there must also be cofactor transport across the BMC. The 1,2-PD-specific bacterial microcompartment (BMC) concentrates low levels of 1,2-PD catabolic enzymes, concentrates volatile reaction intermediates thus enhancing pathway flux and keeps the level of toxic, mutagenic propionaldehyde low. The protein is 1-propanol dehydrogenase PduQ of Salmonella typhimurium (strain LT2 / SGSC1412 / ATCC 700720).